Reading from the N-terminus, the 825-residue chain is NT-3 growth factor receptor (825 aa).

The signal sequence occupies residues 1–31 (MDVSLCPAKCSFWRIFLLGSVWLDYVGSVLA). Disulfide bonds link Cys32-Cys38 and Cys36-Cys45. Topologically, residues 32–429 (CPANCVCSKT…TVTHKPEEDT (398 aa)) are extracellular. N-linked (GlcNAc...) asparagine glycosylation is found at Asn68, Asn72, and Asn79. LRR repeat units lie at residues 104-125 (GLQK…AFAK) and 128-149 (HLRY…LFQT). N-linked (GlcNAc...) asparagine glycans are attached at residues Asn133 and Asn163. The LRRCT domain occupies 160–209 (NFFNCSCDIRWMQLWQEQGEARLDSQSLYCISADGSQLPLFRMNISQCDL). Disulfide bonds link Cys164–Cys189 and Cys166–Cys207. Asn203, Asn218, Asn232, Asn259, Asn267, Asn272, and Asn294 each carry an N-linked (GlcNAc...) asparagine glycan. 2 consecutive Ig-like C2-type domains span residues 210–300 (PEIS…VALT) and 309–382 (SLVE…IAKN). A disulfide bond links Cys231 and Cys284. Cys320 and Cys362 form a disulfide bridge. Asn375 and Asn388 each carry an N-linked (GlcNAc...) asparagine glycan. A helical transmembrane segment spans residues 430–453 (FGVSIAVGLAAFACVLLVVLFIMI). Over 454-825 (NKYGRRSKFG…ATPIYLDILG (372 aa)) the chain is Cytoplasmic. Residue Ser493 is modified to Phosphoserine. Tyr516 bears the Phosphotyrosine mark. The Protein kinase domain maps to 538 to 825 (IVLKRELGEG…ATPIYLDILG (288 aa)). Residues 544 to 552 (LGEGAFGKV) and Lys572 each bind ATP. Asp679 serves as the catalytic Proton acceptor. A phosphotyrosine; by autocatalysis mark is found at Tyr705, Tyr709, and Tyr710.

It belongs to the protein kinase superfamily. Tyr protein kinase family. Insulin receptor subfamily. Exists in a dynamic equilibrium between monomeric (low affinity) and dimeric (high affinity) structures. Binds SH2B2. Interacts with SQSTM1 and KIDINS220. Interacts with PTPRS. Interacts with MAPK8IP3/JIP3. Ligand-mediated auto-phosphorylation. In terms of tissue distribution, isoform 2 expression is restricted to specific areas in adult brain. Isoform 3 transcripts are readily detected early during embryogenesis and are expressed predominantly in adult brain and gonads.

It is found in the membrane. The enzyme catalyses L-tyrosyl-[protein] + ATP = O-phospho-L-tyrosyl-[protein] + ADP + H(+). Functionally, receptor tyrosine kinase involved in nervous system and probably heart development. Upon binding of its ligand NTF3/neurotrophin-3, NTRK3 autophosphorylates and activates different signaling pathways, including the phosphatidylinositol 3-kinase/AKT and the MAPK pathways, that control cell survival and differentiation. The chain is NT-3 growth factor receptor (Ntrk3) from Mus musculus (Mouse).